Reading from the N-terminus, the 556-residue chain is Urocanate hydratase (556 aa).

Residues 52 to 53 (GG), Gln-130, 176 to 178 (GMG), Glu-196, Arg-201, 242 to 243 (NA), 263 to 267 (QTSAH), 273 to 274 (YL), and Tyr-322 contribute to the NAD(+) site. The active site involves Cys-410. NAD(+) is bound at residue Gly-492.

Belongs to the urocanase family. NAD(+) serves as cofactor.

The protein resides in the cytoplasm. It carries out the reaction 4-imidazolone-5-propanoate = trans-urocanate + H2O. The protein operates within amino-acid degradation; L-histidine degradation into L-glutamate; N-formimidoyl-L-glutamate from L-histidine: step 2/3. Catalyzes the conversion of urocanate to 4-imidazolone-5-propionate. The sequence is that of Urocanate hydratase from Shewanella oneidensis (strain ATCC 700550 / JCM 31522 / CIP 106686 / LMG 19005 / NCIMB 14063 / MR-1).